The chain runs to 391 residues: Terminal nucleotidyltransferase 5C (391 aa).

Belongs to the TENT family. In terms of assembly, interacts with BCCIP and PABPC1; the interaction has no effect on TENT5C poly(A) polymerase function. Interacts with PLK4; this interaction leads to the TENT5C recruitment into the centrosome.

The protein resides in the nucleus. It is found in the cytoplasm. It localises to the cytoskeleton. The protein localises to the microtubule organizing center. Its subcellular location is the centrosome. The enzyme catalyses RNA(n) + ATP = RNA(n)-3'-adenine ribonucleotide + diphosphate. Catalyzes the transfer of one adenosine molecule from an ATP to an mRNA poly(A) tail bearing a 3'-OH terminal group and enhances mRNA stability and gene expression. Can also elongate RNA oligos ending with uridine molecule, provided that the sequence is adenosine-rich. Mainly targets mRNAs encoding endoplasmic reticulum-targeted protein. In terms of biological role, (Microbial infection) Seems to enhance replication of some viruses, including yellow fever virus, in response to type I interferon. The sequence is that of Terminal nucleotidyltransferase 5C from Homo sapiens (Human).